Consider the following 289-residue polypeptide: uncharacterized protein (289 aa).

The HTH lysR-type domain maps to 1-58 (MDEKDWILLKILHEEQSVTKTAERLFTSQPSITYRLKKIEEIFGIELFTKRHKGITFT). Positions 18 to 37 (VTKTAERLFTSQPSITYRLK) form a DNA-binding region, H-T-H motif.

This sequence belongs to the LysR transcriptional regulatory family.

This is an uncharacterized protein from Bacillus subtilis (strain 168).